The primary structure comprises 205 residues: 3-demethoxyubiquinol 3-hydroxylase (205 aa).

Residues Glu-54, Glu-84, His-87, Glu-136, Glu-168, and His-171 each contribute to the Fe cation site.

This sequence belongs to the COQ7 family. Fe cation serves as cofactor.

It is found in the cell membrane. The enzyme catalyses a 5-methoxy-2-methyl-3-(all-trans-polyprenyl)benzene-1,4-diol + AH2 + O2 = a 3-demethylubiquinol + A + H2O. The protein operates within cofactor biosynthesis; ubiquinone biosynthesis. Catalyzes the hydroxylation of 2-nonaprenyl-3-methyl-6-methoxy-1,4-benzoquinol during ubiquinone biosynthesis. The chain is 3-demethoxyubiquinol 3-hydroxylase from Acidovorax sp. (strain JS42).